The sequence spans 550 residues: Retron Ec78 probable ATPase (550 aa).

The ATP-binding signature appears at 93–100 (GNNGKGKT).

Functionally, probable ATPase component of antiviral defense system retron Ec78, composed of a non-coding RNA (ncRNA), a reverse transcriptase (RT), this protein and a putative HNH endonuclease. Expression of retron Ec78 confers protection against bacteriophage T5. At multiplicity of infection (MOI) of 0.02 cultures slow growth when infected with T5 but do not collapse, at MOI 2 cultures enter growth stasis. The protein is Retron Ec78 probable ATPase of Escherichia coli.